The primary structure comprises 301 residues: ATP synthase gamma chain (301 aa).

This sequence belongs to the ATPase gamma chain family. In terms of assembly, F-type ATPases have 2 components, CF(1) - the catalytic core - and CF(0) - the membrane proton channel. CF(1) has five subunits: alpha(3), beta(3), gamma(1), delta(1), epsilon(1). CF(0) has three main subunits: a, b and c.

Its subcellular location is the cell inner membrane. Its function is as follows. Produces ATP from ADP in the presence of a proton gradient across the membrane. The gamma chain is believed to be important in regulating ATPase activity and the flow of protons through the CF(0) complex. The protein is ATP synthase gamma chain of Helicobacter pylori (strain P12).